The sequence spans 130 residues: Small ribosomal subunit protein uS8 (130 aa).

This sequence belongs to the universal ribosomal protein uS8 family. As to quaternary structure, part of the 30S ribosomal subunit. Contacts proteins S5 and S12.

In terms of biological role, one of the primary rRNA binding proteins, it binds directly to 16S rRNA central domain where it helps coordinate assembly of the platform of the 30S subunit. The chain is Small ribosomal subunit protein uS8 from Aliivibrio fischeri (strain ATCC 700601 / ES114) (Vibrio fischeri).